The primary structure comprises 994 residues: Regulator of telomere elongation helicase 1 homolog (994 aa).

One can recognise a Helicase ATP-binding domain in the interval 15-300; that stretch reads PKLSVKFPFE…EETARSEADA (286 aa). 50–57 contributes to the ATP binding site; the sequence is SPTGTGKT. 4 residues coordinate [4Fe-4S] cluster: Cys142, Cys160, Cys169, and Cys208. The DEAH box signature appears at 251 to 254; sequence DEAH. The disordered stretch occupies residues 876–895; sequence FKIETPGPSTSTLTQKSEPP. Over residues 882–892 the composition is skewed to polar residues; sequence GPSTSTLTQKS.

It belongs to the helicase family. RAD3/XPD subfamily.

It is found in the nucleus. The catalysed reaction is ATP + H2O = ADP + phosphate + H(+). Functionally, a probable ATP-dependent DNA helicase implicated in DNA repair and the maintenance of genomic stability. Acts as an anti-recombinase to counteract toxic recombination and limit crossover during meiosis. Regulates meiotic recombination and crossover homeostasis by physically dissociating strand invasion events and thereby promotes noncrossover repair by meiotic synthesis dependent strand annealing (SDSA) as well as disassembly of D loop recombination intermediates. The polypeptide is Regulator of telomere elongation helicase 1 homolog (Caenorhabditis elegans).